The sequence spans 169 residues: Large ribosomal subunit protein uL10 (169 aa).

This sequence belongs to the universal ribosomal protein uL10 family. Part of the ribosomal stalk of the 50S ribosomal subunit. The N-terminus interacts with L11 and the large rRNA to form the base of the stalk. The C-terminus forms an elongated spine to which L12 dimers bind in a sequential fashion forming a multimeric L10(L12)X complex.

In terms of biological role, forms part of the ribosomal stalk, playing a central role in the interaction of the ribosome with GTP-bound translation factors. The protein is Large ribosomal subunit protein uL10 of Orientia tsutsugamushi (strain Boryong) (Rickettsia tsutsugamushi).